The chain runs to 266 residues: MRVLISNDDGVFAEGIRTLAAAAVARGHDVTVVCPDQERSATGHGLTLQTPIRAERADELFVPGVTAWACSGTPADCMKLALFELVKDKPDLVLSGINHGPNLGTDVFCSGTVAAAMEGTLEGIPSMAISSACFQWRQFQAGAELAVEVAEQALADQWPENLLLNLNIPPCNRDAMGPLRWTRLSIRRYDEQFSSRVDPRGRAYYWLAGEVVNDLESAGEGPRDWPSDVAQIHANSPSLTPIQPDLFWRGSLSGLPQLKLKDQLVR.

A divalent metal cation contacts are provided by aspartate 8, aspartate 9, serine 40, and asparagine 98.

The protein belongs to the SurE nucleotidase family. It depends on a divalent metal cation as a cofactor.

The protein resides in the cytoplasm. It catalyses the reaction a ribonucleoside 5'-phosphate + H2O = a ribonucleoside + phosphate. In terms of biological role, nucleotidase that shows phosphatase activity on nucleoside 5'-monophosphates. The chain is 5'-nucleotidase SurE from Parasynechococcus marenigrum (strain WH8102).